The following is a 338-amino-acid chain: Putative pectinesterase 63 (338 aa).

A signal peptide spans 1 to 24 (MGYNYVSLIVTILLVVITSPVVFG). Threonine 116 and glutamine 151 together coordinate substrate. The Proton donor role is filled by aspartate 174. Aspartate 195 (nucleophile) is an active-site residue. Arginine 252 lines the substrate pocket.

Belongs to the pectinesterase family.

The protein resides in the secreted. It localises to the cell wall. The enzyme catalyses [(1-&gt;4)-alpha-D-galacturonosyl methyl ester](n) + n H2O = [(1-&gt;4)-alpha-D-galacturonosyl](n) + n methanol + n H(+). It participates in glycan metabolism; pectin degradation; 2-dehydro-3-deoxy-D-gluconate from pectin: step 1/5. In terms of biological role, acts in the modification of cell walls via demethylesterification of cell wall pectin. This Arabidopsis thaliana (Mouse-ear cress) protein is Putative pectinesterase 63 (PME63).